A 206-amino-acid polypeptide reads, in one-letter code: LexA repressor (206 aa).

The H-T-H motif DNA-binding region spans 28 to 48 (RAEIATRLGFKSANAAEEHLK). Active-site for autocatalytic cleavage activity residues include S123 and K160.

Belongs to the peptidase S24 family. As to quaternary structure, homodimer.

It catalyses the reaction Hydrolysis of Ala-|-Gly bond in repressor LexA.. Its function is as follows. Represses a number of genes involved in the response to DNA damage (SOS response), including recA and lexA. In the presence of single-stranded DNA, RecA interacts with LexA causing an autocatalytic cleavage which disrupts the DNA-binding part of LexA, leading to derepression of the SOS regulon and eventually DNA repair. This chain is LexA repressor, found in Shewanella baltica (strain OS223).